The chain runs to 948 residues: MKYLASFRTTLKVSRYLFRALALLIWLLIAFVSVFYIVNALHQRESEIRQEFNLSSDQAQRFIQRTSDVMKELKYIAENRLTAENGVMSSRARDDKMVVPDFEPLFADSDCAAMGSAWRGSLESLAWFMRYWRDNFSAAYDLNRVFLIGSDNLCMANFGLREMPVERDDALKALHERIMKYRNAPQEESGNNLFWISQGARQGVGYFYALTPVYLANRLQALLGVEQSIRMENFFTPGSLPMGVTIIDENGHSLISLTGPDGIIKAEPRWMQERSWFGYTPGFRELVLKKSLPPSSLSIVYSVPVDLVLERIRILILNAILLNVLVGAGLFTLARMYERRIFIPAESDAQRLEEHEQFNRKIVASAPVGICILRTIDGVNILSNELAHTYLNMLTHEDRQRLTQIICGQQVNFVDVLTSNNTNLQISFVHSRYRNENVAICVLVDVSTRVKMEESLQEMAQAAEQASQSKSMFLATVSHELRTPLYGIIGNLDLLQTKELPKGVERLVTAMNNSSSLLLKIISDILDFSKIESEQLKIEPREFSPREVMNHITANYLPLVVRKQLGLYCFIEPDVPVSLNGDPMRLQQVISNLLSNAIKFTDIGCIVLHVRCDGDYLSIRVRDTGVGIPAKEVVRLFDPFFQVGTGVQRNFQGTGLGLAICEKLISMMDGDISVDSEPGMGSQFTLRIPLYGAQYPVKKSVEGLAGTCCWLAVRNTSLCQFIETSLARSGVHTQRYEGQEPAADDILIVDDALEHTWQGRAAVVFCRRHIGIPLERAPGEWVHSVASVHELPALLARIYSIELDSEALSSALPTTDKTADSNDDMMILVVDDHPINRRLLADQLGSLGYQCKTANDGVDALNVLSKNAIDIVLSDVNMPNMDGYRLTQRIRQLGLTLPVVGVTANALAEEKQRCLESGMDSCLSKPVTLDVLKQTLAVYAERVRKTRA.

Residues 1 to 20 (MKYLASFRTTLKVSRYLFRA) lie on the Cytoplasmic side of the membrane. The chain crosses the membrane as a helical span at residues 21-41 (LALLIWLLIAFVSVFYIVNAL). The Periplasmic portion of the chain corresponds to 42-313 (HQRESEIRQE…PVDLVLERIR (272 aa)). The helical transmembrane segment at 314–334 (ILILNAILLNVLVGAGLFTLA) threads the bilayer. Over 335 to 948 (RMYERRIFIP…YAERVRKTRA (614 aa)) the chain is Cytoplasmic. Residues 357 to 425 (QFNRKIVASA…VLTSNNTNLQ (69 aa)) enclose the PAS domain. In terms of domain architecture, Histidine kinase spans 476-692 (TVSHELRTPL…QFTLRIPLYG (217 aa)). H479 is subject to Phosphohistidine; by autocatalysis. The ABL domain maps to 705-805 (AGTCCWLAVR…ARIYSIELDS (101 aa)). One can recognise a Response regulatory domain in the interval 826 to 940 (MILVVDDHPI…VLKQTLAVYA (115 aa)). 4-aspartylphosphate is present on D875.

The protein belongs to the RcsC family. As to quaternary structure, interacts with RcsD. Autophosphorylated. Activation probably requires a transfer of a phosphate group from a His in the transmitter domain to an Asp in the receiver domain.

It is found in the cell inner membrane. It carries out the reaction ATP + protein L-histidine = ADP + protein N-phospho-L-histidine.. Component of the Rcs signaling system, which controls transcription of numerous genes. RcsC functions as a membrane-associated protein kinase that phosphorylates RcsD in response to environmental signals. The phosphoryl group is then transferred to the response regulator RcsB. The sequence is that of Sensor histidine kinase RcsC from Salmonella typhimurium (strain LT2 / SGSC1412 / ATCC 700720).